A 212-amino-acid polypeptide reads, in one-letter code: HTH-type transcriptional regulator RutR (212 aa).

Residues 17-77 enclose the HTH tetR-type domain; that stretch reads SAKKKAILSA…AVLRQILDIW (61 aa). The H-T-H motif DNA-binding region spans 39-58; it reads TRLEQIAELAGVSKTNLLYY.

As to quaternary structure, homodimer.

In terms of biological role, master transcription regulator which represses the degradation of pyrimidines (rutABCDEFG) and purines (gcl operon) for maintenance of metabolic balance between pyrimidines and purines. It also regulates the synthesis of pyrimidine nucleotides and arginine from glutamine (carAB) and the supply of glutamate (gadABWX). This chain is HTH-type transcriptional regulator RutR (rutR), found in Escherichia coli O157:H7.